Here is a 371-residue protein sequence, read N- to C-terminus: Alanine dehydrogenase (371 aa).

Substrate contacts are provided by Arg15 and Lys75. His96 acts as the Proton donor/acceptor in catalysis. Residues Ser134, 178–179, Asp198, Ser220, 239–240, 267–270, Arg279, and 298–301 contribute to the NAD(+) site; these read TA, VL, IAID, and VANM. Asp270 (proton donor/acceptor) is an active-site residue.

The protein belongs to the AlaDH/PNT family. In terms of assembly, homohexamer. Trimer of dimers.

It is found in the cytoplasm. It catalyses the reaction L-alanine + NAD(+) + H2O = pyruvate + NH4(+) + NADH + H(+). It participates in amino-acid degradation; L-alanine degradation via dehydrogenase pathway; NH(3) and pyruvate from L-alanine: step 1/1. Functionally, catalyzes the reversible reductive amination of pyruvate to L-alanine. Required for proficient utilization of D- or L-alanine as a nitrogen source. May be required for the adaptation from aerobic growth to anaerobic dormancy. It could be involved in the maintenance of the NAD pool during the shift to an anaerobic dormant state in which oxygen as a terminal electron acceptor becomes limiting. This chain is Alanine dehydrogenase, found in Mycolicibacterium smegmatis (strain ATCC 700084 / mc(2)155) (Mycobacterium smegmatis).